A 242-amino-acid polypeptide reads, in one-letter code: Transcriptional regulatory protein btr (242 aa).

In terms of domain architecture, HTH crp-type spans 158 to 231 (MRSEQRLAAF…QREVRLIDLP (74 aa)). Residues 191-210 (REEIGNYLGLTLETVSRLFS) constitute a DNA-binding region (H-T-H motif).

Its function is as follows. May regulate gene expression in response to changes in oxygen levels or to changes in the redox potential of the bacterial environment. The sequence is that of Transcriptional regulatory protein btr (btr) from Bordetella pertussis (strain Tohama I / ATCC BAA-589 / NCTC 13251).